The sequence spans 504 residues: Ribonuclease Y (504 aa).

A helical membrane pass occupies residues 2–22 (TTSIVIGVVLVTVGLTFGWTI). The 86-residue stretch at 194–279 (TVSTVNLPSE…EIVQKVTQEV (86 aa)) folds into the KH domain. The region spanning 320–413 (VLYHSKEVAL…VQVADAISAA (94 aa)) is the HD domain.

Belongs to the RNase Y family.

The protein resides in the cell membrane. Its function is as follows. Endoribonuclease that initiates mRNA decay. The chain is Ribonuclease Y from Treponema pallidum (strain Nichols).